The primary structure comprises 325 residues: Methionyl-tRNA formyltransferase (325 aa).

Residue 113–116 (SLLP) participates in (6S)-5,6,7,8-tetrahydrofolate binding.

Belongs to the Fmt family.

The enzyme catalyses L-methionyl-tRNA(fMet) + (6R)-10-formyltetrahydrofolate = N-formyl-L-methionyl-tRNA(fMet) + (6S)-5,6,7,8-tetrahydrofolate + H(+). Functionally, attaches a formyl group to the free amino group of methionyl-tRNA(fMet). The formyl group appears to play a dual role in the initiator identity of N-formylmethionyl-tRNA by promoting its recognition by IF2 and preventing the misappropriation of this tRNA by the elongation apparatus. In Chromohalobacter salexigens (strain ATCC BAA-138 / DSM 3043 / CIP 106854 / NCIMB 13768 / 1H11), this protein is Methionyl-tRNA formyltransferase.